Reading from the N-terminus, the 111-residue chain is Cell division topological specificity factor (111 aa).

It belongs to the MinE family.

Prevents the cell division inhibition by proteins MinC and MinD at internal division sites while permitting inhibition at polar sites. This ensures cell division at the proper site by restricting the formation of a division septum at the midpoint of the long axis of the cell. This is Cell division topological specificity factor from Prochlorococcus marinus (strain MIT 9312).